Consider the following 938-residue polypeptide: Nitrate reductase (938 aa).

Residues 1 to 64 enclose the 4Fe-4S Mo/W bis-MGD-type domain; sequence MSVVQSSCAY…RLLDSLAQPN (64 aa). Positions 8, 11, 15, and 50 each coordinate [4Fe-4S] cluster.

The protein belongs to the prokaryotic molybdopterin-containing oxidoreductase family. NasA/NapA/NarB subfamily. The cofactor is [4Fe-4S] cluster. Mo-bis(molybdopterin guanine dinucleotide) is required as a cofactor.

It is found in the cytoplasm. It carries out the reaction nitrate + a quinol = a quinone + nitrite + H2O. The protein operates within nitrogen metabolism; nitrate reduction (assimilation). In terms of biological role, nitrate reductase is a key enzyme involved in the first step of nitrate assimilation in plants, fungi and bacteria. The polypeptide is Nitrate reductase (Shewanella frigidimarina (strain NCIMB 400)).